The following is a 553-amino-acid chain: Arginine--tRNA ligase (553 aa).

A 'HIGH' region motif is present at residues 132-140 (PTGDLHIGH).

Belongs to the class-I aminoacyl-tRNA synthetase family. As to quaternary structure, monomer.

It localises to the cytoplasm. It catalyses the reaction tRNA(Arg) + L-arginine + ATP = L-arginyl-tRNA(Arg) + AMP + diphosphate. This is Arginine--tRNA ligase from Staphylococcus aureus (strain N315).